Consider the following 212-residue polypeptide: Pyridoxine/pyridoxamine 5'-phosphate oxidase (212 aa).

Substrate-binding positions include 8–11 (RREY) and lysine 66. Residues 61–66 (RIVLLK), 76–77 (FT), arginine 82, lysine 83, and glutamine 105 contribute to the FMN site. Tyrosine 123, arginine 127, and serine 131 together coordinate substrate. FMN contacts are provided by residues 140–141 (QS) and tryptophan 185. 191–193 (RLH) provides a ligand contact to substrate. Arginine 195 serves as a coordination point for FMN.

The protein belongs to the pyridoxamine 5'-phosphate oxidase family. In terms of assembly, homodimer. The cofactor is FMN.

It carries out the reaction pyridoxamine 5'-phosphate + O2 + H2O = pyridoxal 5'-phosphate + H2O2 + NH4(+). The enzyme catalyses pyridoxine 5'-phosphate + O2 = pyridoxal 5'-phosphate + H2O2. It participates in cofactor metabolism; pyridoxal 5'-phosphate salvage; pyridoxal 5'-phosphate from pyridoxamine 5'-phosphate: step 1/1. Its pathway is cofactor metabolism; pyridoxal 5'-phosphate salvage; pyridoxal 5'-phosphate from pyridoxine 5'-phosphate: step 1/1. Its function is as follows. Catalyzes the oxidation of either pyridoxine 5'-phosphate (PNP) or pyridoxamine 5'-phosphate (PMP) into pyridoxal 5'-phosphate (PLP). In Shewanella frigidimarina (strain NCIMB 400), this protein is Pyridoxine/pyridoxamine 5'-phosphate oxidase.